Here is a 209-residue protein sequence, read N- to C-terminus: Protease (209 aa).

Residues histidine 55, aspartate 72, and cysteine 123 contribute to the active site.

The protein belongs to the peptidase C5 family. Interacts with protease cofactor pVI-C; this interaction is necessary for protease activation.

It is found in the virion. Its subcellular location is the host nucleus. The enzyme catalyses Cleaves proteins of the adenovirus and its host cell at two consensus sites: -Yaa-Xaa-Gly-Gly-|-Xaa- and -Yaa-Xaa-Gly-Xaa-|-Gly- (in which Yaa is Met, Ile or Leu, and Xaa is any amino acid).. Its activity is regulated as follows. Requires DNA and protease cofactor for maximal activation. Inside nascent virions, becomes partially activated by binding to the viral DNA, allowing it to cleave the cofactor that binds to the protease and fully activates it. Actin, like the viral protease cofactor, seems to act as a cofactor in the cleavage of cytokeratin 18 and of actin itself. Its function is as follows. Cleaves viral precursor proteins (pTP, pIIIa, pVI, pVII, pVIII, and pX) inside newly assembled particles giving rise to mature virions. Protease complexed to its cofactor slides along the viral DNA to specifically locate and cleave the viral precursors. Mature virions have a weakened organization compared to the unmature virions, thereby facilitating subsequent uncoating. Without maturation, the particle lacks infectivity and is unable to uncoat. Late in adenovirus infection, in the cytoplasm, may participate in the cytoskeleton destruction. Cleaves host cell cytoskeletal keratins K7 and K18. In Human adenovirus D serotype 17 (HAdV-17), this protein is Protease.